We begin with the raw amino-acid sequence, 542 residues long: Phosphoacetylglucosamine mutase (542 aa).

M1 is subject to N-acetylmethionine. At T62 the chain carries Phosphothreonine. The active-site Phosphoserine intermediate is the S64. S64, D276, D278, and D280 together coordinate Mg(2+). The residue at position 64 (S64) is a Phosphoserine. Residues 370–372 (EAN), 496–500 (RPSGT), and R505 contribute to the substrate site.

It belongs to the phosphohexose mutase family. The cofactor is Mg(2+). Found in many tissues except lung. Relatively high expression in pancreas, heart, liver, and placenta, and relatively low expression in brain, skeletal muscle and kidney.

The catalysed reaction is N-acetyl-alpha-D-glucosamine 1-phosphate = N-acetyl-D-glucosamine 6-phosphate. The protein operates within nucleotide-sugar biosynthesis; UDP-N-acetyl-alpha-D-glucosamine biosynthesis; N-acetyl-alpha-D-glucosamine 1-phosphate from alpha-D-glucosamine 6-phosphate (route I): step 2/2. In terms of biological role, catalyzes the conversion of GlcNAc-6-P into GlcNAc-1-P during the synthesis of uridine diphosphate/UDP-GlcNAc, a sugar nucleotide critical to multiple glycosylation pathways including protein N- and O-glycosylation. This chain is Phosphoacetylglucosamine mutase, found in Homo sapiens (Human).